A 997-amino-acid chain; its full sequence is Phosphoenolpyruvate carboxylase (997 aa).

The disordered stretch occupies residues 1–67 (MKSSGSARTA…KPAARTREDK (67 aa)). Catalysis depends on residues His-207 and Lys-649.

This sequence belongs to the PEPCase type 1 family. It depends on Mg(2+) as a cofactor.

The catalysed reaction is oxaloacetate + phosphate = phosphoenolpyruvate + hydrogencarbonate. Forms oxaloacetate, a four-carbon dicarboxylic acid source for the tricarboxylic acid cycle. The chain is Phosphoenolpyruvate carboxylase from Burkholderia vietnamiensis (strain G4 / LMG 22486) (Burkholderia cepacia (strain R1808)).